A 149-amino-acid polypeptide reads, in one-letter code: Transcriptional repressor NrdR (149 aa).

Residues 3–34 (CPFCSENDTKVIDSRLVADGHQVRRRRQCLAC) fold into a zinc finger. Residues 49-139 (PRVIKSNGNR…VYRSFEDVRE (91 aa)) form the ATP-cone domain.

The protein belongs to the NrdR family. Zn(2+) serves as cofactor.

In terms of biological role, negatively regulates transcription of bacterial ribonucleotide reductase nrd genes and operons by binding to NrdR-boxes. This Vibrio cholerae serotype O1 (strain ATCC 39541 / Classical Ogawa 395 / O395) protein is Transcriptional repressor NrdR.